Here is a 168-residue protein sequence, read N- to C-terminus: MRTILNKLNINGEIMLIKDIMKKPIVVYEDNDLIDVIRLFRKNKISGAPVLNKDGKLVGIISESDIVKTIVTHNEDLNLILPSPLDLIELPLKTALKIEEFMEDLKNALKTKVRDVMTRKVIVAKPDMTINDAAKLMVKNNIKRLPVVDDEGNLIGIVTRGDLIEALI.

2 CBS domains span residues 20 to 77 (IMKK…NEDL) and 117 to 168 (MTRK…EALI).

This is an uncharacterized protein from Methanocaldococcus jannaschii (strain ATCC 43067 / DSM 2661 / JAL-1 / JCM 10045 / NBRC 100440) (Methanococcus jannaschii).